Reading from the N-terminus, the 121-residue chain is Neuromedin-B (121 aa).

The N-terminal stretch at 1–24 (MARRAGGARMFGSLLLFALLAAGV) is a signal peptide. A Methionine amide modification is found at Met56. Residues 60-121 (SLEPSSPSPL…RRLLVQILQK (62 aa)) constitute a propeptide that is removed on maturation.

Belongs to the bombesin/neuromedin-B/ranatensin family.

The protein localises to the secreted. The protein resides in the cell projection. It localises to the neuron projection. Stimulates smooth muscle contraction. Induces sighing by acting directly on the pre-Botzinger complex, a cluster of several thousand neurons in the ventrolateral medulla responsible for inspiration during respiratory activity. Contributes to the induction of sneezing following exposure to chemical irritants or allergens which causes release of NMB by nasal sensory neurons and activation of NMBR-expressing neurons in the sneeze-evoking region of the brainstem. These in turn activate neurons of the caudal ventral respiratory group, giving rise to the sneezing response. Contributes to induction of acute itch, possibly through activation of the NMBR receptor on dorsal root ganglion neurons. Increases expression of NMBR and steroidogenic mediators STAR, CYP11A1 and HSD3B1 in Leydig cells, induces secretion of testosterone by Leydig cells and also promotes Leydig cell proliferation. Plays a role in the innate immune response to influenza A virus infection by enhancing interferon alpha expression and reducing expression of IL6. Plays a role in CSF1-induced proliferation of osteoclast precursors by contributing to the positive regulation of the expression of the CSF1 receptor CSF1R. This is Neuromedin-B (NMB) from Homo sapiens (Human).